Here is a 229-residue protein sequence, read N- to C-terminus: Large ribosomal subunit protein uL1 (229 aa).

The protein belongs to the universal ribosomal protein uL1 family. In terms of assembly, part of the 50S ribosomal subunit.

Its function is as follows. Binds directly to 23S rRNA. The L1 stalk is quite mobile in the ribosome, and is involved in E site tRNA release. Protein L1 is also a translational repressor protein, it controls the translation of the L11 operon by binding to its mRNA. This chain is Large ribosomal subunit protein uL1, found in Streptococcus pneumoniae serotype 2 (strain D39 / NCTC 7466).